Here is a 256-residue protein sequence, read N- to C-terminus: 5-oxoprolinase subunit A (256 aa).

The protein belongs to the LamB/PxpA family. Forms a complex composed of PxpA, PxpB and PxpC.

The catalysed reaction is 5-oxo-L-proline + ATP + 2 H2O = L-glutamate + ADP + phosphate + H(+). Its function is as follows. Catalyzes the cleavage of 5-oxoproline to form L-glutamate coupled to the hydrolysis of ATP to ADP and inorganic phosphate. This chain is 5-oxoprolinase subunit A, found in Alkaliphilus metalliredigens (strain QYMF).